A 475-amino-acid chain; its full sequence is Ribulose bisphosphate carboxylase large chain (475 aa).

Residues 1–2 constitute a propeptide that is removed on maturation; the sequence is MS. Proline 3 carries the post-translational modification N-acetylproline. The substrate site is built by asparagine 123 and threonine 173. Lysine 175 (proton acceptor) is an active-site residue. Residue lysine 177 coordinates substrate. The Mg(2+) site is built by lysine 201, aspartate 203, and glutamate 204. Lysine 201 is subject to N6-carboxylysine. Histidine 294 (proton acceptor) is an active-site residue. Residues arginine 295, histidine 327, and serine 379 each coordinate substrate.

This sequence belongs to the RuBisCO large chain family. Type I subfamily. In terms of assembly, heterohexadecamer of 8 large chains and 8 small chains; disulfide-linked. The disulfide link is formed within the large subunit homodimers. Mg(2+) serves as cofactor. In terms of processing, the disulfide bond which can form in the large chain dimeric partners within the hexadecamer appears to be associated with oxidative stress and protein turnover.

The protein resides in the plastid. It localises to the chloroplast. The enzyme catalyses 2 (2R)-3-phosphoglycerate + 2 H(+) = D-ribulose 1,5-bisphosphate + CO2 + H2O. It catalyses the reaction D-ribulose 1,5-bisphosphate + O2 = 2-phosphoglycolate + (2R)-3-phosphoglycerate + 2 H(+). Functionally, ruBisCO catalyzes two reactions: the carboxylation of D-ribulose 1,5-bisphosphate, the primary event in carbon dioxide fixation, as well as the oxidative fragmentation of the pentose substrate in the photorespiration process. Both reactions occur simultaneously and in competition at the same active site. This is Ribulose bisphosphate carboxylase large chain from Gnetum parvifolium (Small-leaved jointfir).